Consider the following 269-residue polypeptide: 4-hydroxy-tetrahydrodipicolinate reductase (269 aa).

NAD(+)-binding positions include 8–13 (GAAGRM) and glutamate 34. Arginine 35 provides a ligand contact to NADP(+). NAD(+) is bound by residues 98–100 (GTT) and 122–125 (APNY). The Proton donor/acceptor role is filled by histidine 155. Histidine 156 contributes to the (S)-2,3,4,5-tetrahydrodipicolinate binding site. Residue lysine 159 is the Proton donor of the active site. A (S)-2,3,4,5-tetrahydrodipicolinate-binding site is contributed by 165-166 (GT).

Belongs to the DapB family.

Its subcellular location is the cytoplasm. The enzyme catalyses (S)-2,3,4,5-tetrahydrodipicolinate + NAD(+) + H2O = (2S,4S)-4-hydroxy-2,3,4,5-tetrahydrodipicolinate + NADH + H(+). It carries out the reaction (S)-2,3,4,5-tetrahydrodipicolinate + NADP(+) + H2O = (2S,4S)-4-hydroxy-2,3,4,5-tetrahydrodipicolinate + NADPH + H(+). Its pathway is amino-acid biosynthesis; L-lysine biosynthesis via DAP pathway; (S)-tetrahydrodipicolinate from L-aspartate: step 4/4. Catalyzes the conversion of 4-hydroxy-tetrahydrodipicolinate (HTPA) to tetrahydrodipicolinate. This is 4-hydroxy-tetrahydrodipicolinate reductase from Vibrio atlanticus (strain LGP32) (Vibrio splendidus (strain Mel32)).